The chain runs to 435 residues: Salicylate hydroxylase (435 aa).

An FAD-binding site is contributed by 12-41; that stretch reads RVAIVGGGISGLALALSLCKHSHLNVQLFE.

It depends on FAD as a cofactor.

The catalysed reaction is salicylate + NADH + O2 + 2 H(+) = catechol + CO2 + NAD(+) + H2O. It participates in aromatic compound metabolism; naphthalene degradation. This chain is Salicylate hydroxylase (nahG), found in Pseudomonas putida (Arthrobacter siderocapsulatus).